The sequence spans 72 residues: Putative snRNP Sm-like protein (72 aa).

A Sm domain is found at 4 to 72; sequence RPLDILNNAL…RGDNVVYVSP (69 aa).

The protein belongs to the snRNP Sm proteins family.

The polypeptide is Putative snRNP Sm-like protein (Methanosarcina barkeri (strain Fusaro / DSM 804)).